Reading from the N-terminus, the 214-residue chain is MATTRKPRGGAGGATQPALDFDAPGEIVCGVDEAGRGPLAGPVVAAAVVLDPARPIVGLDDSKALSAKKRERLFDEIVVHALAYSVASASVEEIDSLNILHATMLAMKRAVEGLSVLPTLAKIDGNRCPMLAIRSEAIVGGDALVPSISAASILAKVTRDRMLVELHQQFPMYGFDAHAGYGTPQHLAALREHGPCEHHRRSFAPVREAFDLIR.

In terms of domain architecture, RNase H type-2 spans 26-214 (EIVCGVDEAG…PVREAFDLIR (189 aa)). A divalent metal cation is bound by residues Asp-32, Glu-33, and Asp-124.

Belongs to the RNase HII family. It depends on Mn(2+) as a cofactor. The cofactor is Mg(2+).

It is found in the cytoplasm. The catalysed reaction is Endonucleolytic cleavage to 5'-phosphomonoester.. Endonuclease that specifically degrades the RNA of RNA-DNA hybrids. The protein is Ribonuclease HII of Burkholderia pseudomallei (strain 668).